The primary structure comprises 248 residues: Protein maestro (248 aa).

The disordered stretch occupies residues 1-23; it reads MEQTRKIPNQPLPTPTSQSKKRR. Residues 128–163 form an HEAT repeat; that stretch reads SFFIDITLQARTLLDDEDDSVRYSAFVLFGQLASFA.

Prominent expression seen in testis, brain, liver and heart. Weakly expressed in the kidney.

Its subcellular location is the nucleus. It is found in the nucleolus. In Mus musculus (Mouse), this protein is Protein maestro (Mro).